A 989-amino-acid chain; its full sequence is Phosphoenolpyruvate carboxylase (989 aa).

Active-site residues include His175 and Lys630.

It belongs to the PEPCase type 1 family. Requires Mg(2+) as cofactor.

It carries out the reaction oxaloacetate + phosphate = phosphoenolpyruvate + hydrogencarbonate. Its function is as follows. Forms oxaloacetate, a four-carbon dicarboxylic acid source for the tricarboxylic acid cycle. The chain is Phosphoenolpyruvate carboxylase from Prochlorococcus marinus (strain MIT 9515).